The sequence spans 246 residues: Bis(5'-nucleosyl)-tetraphosphatase PrpE [asymmetrical] (246 aa).

This sequence belongs to the PrpE family. Requires Ni(2+) as cofactor.

The enzyme catalyses P(1),P(4)-bis(5'-guanosyl) tetraphosphate + H2O = GMP + GTP + 2 H(+). Its function is as follows. Asymmetrically hydrolyzes Ap4p to yield AMP and ATP. This chain is Bis(5'-nucleosyl)-tetraphosphatase PrpE [asymmetrical], found in Bacillus cereus (strain B4264).